Here is a 785-residue protein sequence, read N- to C-terminus: Protein kintoun (785 aa).

Composition is skewed to basic and acidic residues over residues 622-638 (EHNEQCTDHSESERDTS) and 662-679 (HNIELGREHTSERDKEPK). 2 disordered regions span residues 622 to 698 (EHNE…DSHL) and 719 to 749 (KSSVQTTQESDLDEDDMPDNSDHLQNSASSN). Over residues 681-695 (TSCTAESTSGQQPND) the composition is skewed to polar residues. Positions 728–737 (SDLDEDDMPD) are enriched in acidic residues.

It belongs to the PIH1 family. Kintoun subfamily.

The protein localises to the cytoplasm. It is found in the dynein axonemal particle. Functionally, required for cytoplasmic pre-assembly of axonemal dyneins, thereby playing a central role in motility in cilia and flagella. Involved in pre-assembly of dynein arm complexes in the cytoplasm before intraflagellar transport loads them for the ciliary compartment. This chain is Protein kintoun, found in Xenopus tropicalis (Western clawed frog).